The primary structure comprises 360 residues: BLOC-1-related complex subunit 6 (360 aa).

Residues 1–10 (MEAARGRLGP) are compositionally biased toward basic and acidic residues. The disordered stretch occupies residues 1-201 (MEAARGRLGP…AGAGGGRRAT (201 aa)). Over residues 23-35 (VTFSGRPSRTLSK) the composition is skewed to polar residues. The residue at position 41 (T41) is a Phosphothreonine. Residues 71 to 83 (HRPELDTWEDKPS) show a composition bias toward basic and acidic residues. Positions 89–100 (SGARGSRGTSGS) are enriched in low complexity. S130 is subject to Phosphoserine. A compositionally biased stretch (acidic residues) spans 144–156 (EGDDDDDGDDEEA). Residue S173 is modified to Phosphoserine. Residues 179-198 (GACGGGGSSSSGEAGAGGGR) show a composition bias toward gly residues. Phosphothreonine is present on T201. Position 204 is a phosphoserine (S204).

Belongs to the BORCS6 family. Component of the BLOC-one-related complex (BORC) which is composed of BLOC1S1, BLOC1S2, BORCS5, BORCS6, BORCS7, BORCS8, KXD1 and SNAPIN.

Its subcellular location is the lysosome membrane. Functionally, as part of the BORC complex may play a role in lysosomes movement and localization at the cell periphery. Associated with the cytosolic face of lysosomes, the BORC complex may recruit ARL8B and couple lysosomes to microtubule plus-end-directed kinesin motor. The protein is BLOC-1-related complex subunit 6 of Rattus norvegicus (Rat).